The sequence spans 255 residues: Tablysin 15 (255 aa).

A signal peptide spans 1–23; sequence MTSIPVSSFLLAALVLQYATSDA. Intrachain disulfides connect Cys27/Cys40, Cys31/Cys117, and Cys49/Cys110. A Cell attachment site motif is present at residues 32-34; that stretch reads RGD. Residues 67-211 form the SCP domain; the sequence is LSKINDVRDH…KARALLTCNF (145 aa). 3 residues coordinate leukotriene E4: Trp82, His153, and Lys156. 2 disulfides stabilise this stretch: Cys192–Cys209 and Cys232–Cys243.

Belongs to the CRISP family. Expressed in salivary glands.

The protein localises to the secreted. Anti-inflammatory scavenger of eicosanoids and antithrombotic protein that inhibits platelets aggregation induced by collagen, ADP and convulxin (GPVI agonist). Exhibits high affinity binding for glycoprotein IIb-IIIa receptor (ITGA2B/ITGB3) and endothelial cell alphaVbeta3 (ITGAV/ITGB3) integrins, but not for alpha-5/beta-1 or alpha-2/beta-1. Accordingly, it blocks endothelial cell adhesion to vitronectin (IC(50)~1 nM) and marginally to fibronectin (IC(50)~1 uM), but not to collagen. It also inhibits fibroblast growth factor (FGF)-induced endothelial cell proliferation, and attenuates tube formation in vitro. In addition, it dose-dependently attenuates thrombus formation to collagen under flow. Also binds proinflammatory cysteinyl leukotrienes (leukotrienes C4 (LTC4), D4 (LTD4) and E4 (LTE4)) with submicromolar affinities. This Tabanus yao (Horsefly) protein is Tablysin 15.